Reading from the N-terminus, the 470-residue chain is Argininosuccinate lyase (470 aa).

It belongs to the lyase 1 family. Argininosuccinate lyase subfamily.

The protein localises to the cytoplasm. It carries out the reaction 2-(N(omega)-L-arginino)succinate = fumarate + L-arginine. The protein operates within amino-acid biosynthesis; L-arginine biosynthesis; L-arginine from L-ornithine and carbamoyl phosphate: step 3/3. This is Argininosuccinate lyase from Mycolicibacterium vanbaalenii (strain DSM 7251 / JCM 13017 / BCRC 16820 / KCTC 9966 / NRRL B-24157 / PYR-1) (Mycobacterium vanbaalenii).